Reading from the N-terminus, the 798-residue chain is Cadherin-20 (798 aa).

Residues Met1–Gly35 form the signal peptide. A propeptide spanning residues Ser36–Arg58 is cleaved from the precursor. A glycan (N-linked (GlcNAc...) asparagine) is linked at Asn47. Topologically, residues Ser59–Arg618 are extracellular. Cadherin domains follow at residues Trp60–Phe164, Leu165–Phe273, Pro274–Phe392, Glu389–Phe493, and Phe493–Ser615. Positions Arg88–Asp90 match the Cell attachment site motif. Asn260 carries an N-linked (GlcNAc...) asparagine glycan. Residues Asn419, Asn460, and Asn541 are each glycosylated (N-linked (GlcNAc...) asparagine). The chain crosses the membrane as a helical span at residues Gly619–Leu639. Residues Ser640 to Trp798 are Cytoplasmic-facing.

In terms of tissue distribution, detected in embryonic spinal cord, in the brachial and lumbar section of motor neurons (at protein level). Detected in ventro-lateral portion of embryonic spinal cord, in the brachial and lumbar section of embryonic motor neurons. Detected in embryonic adductor motor neurons and embryonic dorsal root ganglion. Detected in the caudal half of newly generated somites and in presomitic mesoderm.

Its subcellular location is the cell membrane. Cadherins are calcium-dependent cell adhesion proteins. They preferentially interact with themselves in a homophilic manner in connecting cells; cadherins may thus contribute to the sorting of heterogeneous cell types. In Gallus gallus (Chicken), this protein is Cadherin-20 (CDH20).